The sequence spans 163 residues: D-aminoacyl-tRNA deacylase (163 aa).

The short motif at 141-142 (GP) is the Gly-cisPro motif, important for rejection of L-amino acids element.

The protein belongs to the DTD family. Homodimer.

It is found in the cytoplasm. It carries out the reaction glycyl-tRNA(Ala) + H2O = tRNA(Ala) + glycine + H(+). The enzyme catalyses a D-aminoacyl-tRNA + H2O = a tRNA + a D-alpha-amino acid + H(+). In terms of biological role, an aminoacyl-tRNA editing enzyme that deacylates mischarged D-aminoacyl-tRNAs. Also deacylates mischarged glycyl-tRNA(Ala), protecting cells against glycine mischarging by AlaRS. Acts via tRNA-based rather than protein-based catalysis; rejects L-amino acids rather than detecting D-amino acids in the active site. By recycling D-aminoacyl-tRNA to D-amino acids and free tRNA molecules, this enzyme counteracts the toxicity associated with the formation of D-aminoacyl-tRNA entities in vivo and helps enforce protein L-homochirality. In Neisseria meningitidis serogroup B (strain ATCC BAA-335 / MC58), this protein is D-aminoacyl-tRNA deacylase.